We begin with the raw amino-acid sequence, 622 residues long: Low affinity potassium transport system protein Kup (622 aa).

12 consecutive transmembrane segments (helical) span residues 9 to 29 (LPAI…TSPL), 49 to 69 (VFGF…IKYL), 103 to 123 (VIMG…TPAI), 137 to 157 (PQLD…LFMI), 165 to 185 (VGKL…GLGL), 213 to 233 (VSFI…VLYA), 247 to 267 (WFTV…ALLL), 276 to 296 (PFFL…AALA), 337 to 357 (IYIP…IVSF), 363 to 383 (LAAA…ILST), 396 to 416 (FVAL…TANL), and 419 to 439 (LLSG…VMTT).

This sequence belongs to the HAK/KUP transporter (TC 2.A.72) family.

It localises to the cell inner membrane. It carries out the reaction K(+)(in) + H(+)(in) = K(+)(out) + H(+)(out). In terms of biological role, responsible for the low-affinity transport of potassium into the cell. Likely operates as a K(+):H(+) symporter. The chain is Low affinity potassium transport system protein Kup from Shigella flexneri.